We begin with the raw amino-acid sequence, 315 residues long: Lipoyl synthase (315 aa).

[4Fe-4S] cluster-binding residues include Cys-62, Cys-67, Cys-73, Cys-88, Cys-92, Cys-95, and Ser-302. The Radical SAM core domain maps to 74 to 292 (FNHGTATFMI…KIALKLGFIR (219 aa)).

Belongs to the radical SAM superfamily. Lipoyl synthase family. [4Fe-4S] cluster serves as cofactor.

The protein resides in the cytoplasm. The enzyme catalyses [[Fe-S] cluster scaffold protein carrying a second [4Fe-4S](2+) cluster] + N(6)-octanoyl-L-lysyl-[protein] + 2 oxidized [2Fe-2S]-[ferredoxin] + 2 S-adenosyl-L-methionine + 4 H(+) = [[Fe-S] cluster scaffold protein] + N(6)-[(R)-dihydrolipoyl]-L-lysyl-[protein] + 4 Fe(3+) + 2 hydrogen sulfide + 2 5'-deoxyadenosine + 2 L-methionine + 2 reduced [2Fe-2S]-[ferredoxin]. The protein operates within protein modification; protein lipoylation via endogenous pathway; protein N(6)-(lipoyl)lysine from octanoyl-[acyl-carrier-protein]: step 2/2. In terms of biological role, catalyzes the radical-mediated insertion of two sulfur atoms into the C-6 and C-8 positions of the octanoyl moiety bound to the lipoyl domains of lipoate-dependent enzymes, thereby converting the octanoylated domains into lipoylated derivatives. The protein is Lipoyl synthase of Vesicomyosocius okutanii subsp. Calyptogena okutanii (strain HA).